The sequence spans 426 residues: Gamma-glutamyl phosphate reductase (426 aa).

The protein belongs to the gamma-glutamyl phosphate reductase family.

It is found in the cytoplasm. The catalysed reaction is L-glutamate 5-semialdehyde + phosphate + NADP(+) = L-glutamyl 5-phosphate + NADPH + H(+). It participates in amino-acid biosynthesis; L-proline biosynthesis; L-glutamate 5-semialdehyde from L-glutamate: step 2/2. Its function is as follows. Catalyzes the NADPH-dependent reduction of L-glutamate 5-phosphate into L-glutamate 5-semialdehyde and phosphate. The product spontaneously undergoes cyclization to form 1-pyrroline-5-carboxylate. In Delftia acidovorans (strain DSM 14801 / SPH-1), this protein is Gamma-glutamyl phosphate reductase.